The primary structure comprises 268 residues: Tryptophan synthase alpha chain (268 aa).

Active-site proton acceptor residues include Glu-49 and Asp-60.

It belongs to the TrpA family. In terms of assembly, tetramer of two alpha and two beta chains.

The catalysed reaction is (1S,2R)-1-C-(indol-3-yl)glycerol 3-phosphate + L-serine = D-glyceraldehyde 3-phosphate + L-tryptophan + H2O. It functions in the pathway amino-acid biosynthesis; L-tryptophan biosynthesis; L-tryptophan from chorismate: step 5/5. Functionally, the alpha subunit is responsible for the aldol cleavage of indoleglycerol phosphate to indole and glyceraldehyde 3-phosphate. This is Tryptophan synthase alpha chain from Haemophilus influenzae (strain 86-028NP).